Consider the following 252-residue polypeptide: ATP synthase subunit a (252 aa).

6 consecutive transmembrane segments (helical) span residues 29–49 (FTNS…FLFL), 87–107 (FFPL…LGLF), 117–137 (IIVT…YGFM), 146–166 (LFVP…IEVI), 188–208 (ITLK…AVGV), and 211–231 (SILP…VAFL).

The protein belongs to the ATPase A chain family. In terms of assembly, F-type ATPases have 2 components, CF(1) - the catalytic core - and CF(0) - the membrane proton channel. CF(1) has five subunits: alpha(3), beta(3), gamma(1), delta(1), epsilon(1). CF(0) has three main subunits: a(1), b(2) and c(9-12). The alpha and beta chains form an alternating ring which encloses part of the gamma chain. CF(1) is attached to CF(0) by a central stalk formed by the gamma and epsilon chains, while a peripheral stalk is formed by the delta and b chains.

It is found in the cell inner membrane. In terms of biological role, key component of the proton channel; it plays a direct role in the translocation of protons across the membrane. The sequence is that of ATP synthase subunit a from Mesorhizobium japonicum (strain LMG 29417 / CECT 9101 / MAFF 303099) (Mesorhizobium loti (strain MAFF 303099)).